The following is a 174-amino-acid chain: Large ribosomal subunit protein uL10 (174 aa).

Belongs to the universal ribosomal protein uL10 family. As to quaternary structure, part of the ribosomal stalk of the 50S ribosomal subunit. The N-terminus interacts with L11 and the large rRNA to form the base of the stalk. The C-terminus forms an elongated spine to which L12 dimers bind in a sequential fashion forming a multimeric L10(L12)X complex.

Its function is as follows. Forms part of the ribosomal stalk, playing a central role in the interaction of the ribosome with GTP-bound translation factors. This is Large ribosomal subunit protein uL10 from Nitrosospira multiformis (strain ATCC 25196 / NCIMB 11849 / C 71).